The chain runs to 430 residues: Trigger factor (430 aa).

The PPIase FKBP-type domain maps to Gly-163 to Pro-248.

The protein belongs to the FKBP-type PPIase family. Tig subfamily.

The protein resides in the cytoplasm. The catalysed reaction is [protein]-peptidylproline (omega=180) = [protein]-peptidylproline (omega=0). Involved in protein export. Acts as a chaperone by maintaining the newly synthesized protein in an open conformation. Functions as a peptidyl-prolyl cis-trans isomerase. In Lawsonia intracellularis (strain PHE/MN1-00), this protein is Trigger factor.